The chain runs to 931 residues: 3'-5' exonuclease DinG (931 aa).

An Exonuclease domain is found at 7-162; that stretch reads VVIDVETTGN…DSDAEVTGLI (156 aa). The Helicase ATP-binding domain occupies 250–510; that stretch reads LSELMPGYEK…KKMRQLFQRN (261 aa). Residue 284 to 291 participates in ATP binding; sequence APPGIGKT. Positions 462-465 match the DEAH box motif; it reads DEAH. The Helicase C-terminal domain occupies 741–897; that stretch reads DTARYIELMA…TIIILDRRIK (157 aa).

The protein belongs to the helicase family. DinG subfamily. Type 2 sub-subfamily.

It is found in the cytoplasm. 3'-5' exonuclease. The protein is 3'-5' exonuclease DinG of Bacillus subtilis (strain 168).